Consider the following 83-residue polypeptide: MSSGGLLLLLGLLTLWEVLTPVSSKDRPDFCELPADTGPCRVGFPSFYYNPDEKKCLEFIYGGCEGSANNFITKEECESTCAA.

Residues 1 to 24 (MSSGGLLLLLGLLTLWEVLTPVSS) form the signal peptide. The region spanning 31–81 (CELPADTGPCRVGFPSFYYNPDEKKCLEFIYGGCEGSANNFITKEECESTC) is the BPTI/Kunitz inhibitor domain. Intrachain disulfides connect C31/C81, C40/C64, and C56/C77.

Belongs to the venom Kunitz-type family. Expressed by the venom gland.

It is found in the secreted. Functionally, serine protease inhibitor. In Oxyuranus scutellatus scutellatus (Australian taipan), this protein is Kunitz-type serine protease inhibitor scutellin-1.